The primary structure comprises 338 residues: E3 ubiquitin-protein ligase SPL1 (338 aa).

The chain crosses the membrane as a helical span at residues 1–21 (MIHLAGFTCCLGGVALYLLTR). At 22-223 (STGRDIKSIT…KLGDLSRRFK (202 aa)) the chain is on the chloroplast intermembrane side. A helical transmembrane segment spans residues 224-246 (YASMGLTVLGVILISKPVIEYIL). The Cytoplasmic portion of the chain corresponds to 247–338 (KRIEDTLERR…IQQVLKIYRH (92 aa)). The RING-type zinc finger occupies 291 to 326 (CVVCLDQKYNTAFVECGHMCCCTPCSLQLRTCPLCR).

It is found in the plastid. It localises to the chloroplast outer membrane. It carries out the reaction S-ubiquitinyl-[E2 ubiquitin-conjugating enzyme]-L-cysteine + [acceptor protein]-L-lysine = [E2 ubiquitin-conjugating enzyme]-L-cysteine + N(6)-ubiquitinyl-[acceptor protein]-L-lysine.. The protein operates within protein modification; protein ubiquitination. Functionally, possesses E3 ubiquitin-protein ligase activity. This Arabidopsis thaliana (Mouse-ear cress) protein is E3 ubiquitin-protein ligase SPL1.